A 642-amino-acid chain; its full sequence is Threonine--tRNA ligase (642 aa).

Positions 1–61 constitute a TGS domain; sequence MPVITLPDGS…ETDAELSIIT (61 aa). The interval 243–534 is catalytic; that stretch reads DHRKIGKQLD…LIEEYAGRFP (292 aa). Residues cysteine 334, histidine 385, and histidine 511 each coordinate Zn(2+).

This sequence belongs to the class-II aminoacyl-tRNA synthetase family. Homodimer. Requires Zn(2+) as cofactor.

The protein resides in the cytoplasm. The catalysed reaction is tRNA(Thr) + L-threonine + ATP = L-threonyl-tRNA(Thr) + AMP + diphosphate + H(+). Its function is as follows. Catalyzes the attachment of threonine to tRNA(Thr) in a two-step reaction: L-threonine is first activated by ATP to form Thr-AMP and then transferred to the acceptor end of tRNA(Thr). Also edits incorrectly charged L-seryl-tRNA(Thr). The sequence is that of Threonine--tRNA ligase from Shewanella sp. (strain W3-18-1).